Consider the following 404-residue polypeptide: Argininosuccinate synthase (404 aa).

ATP is bound by residues 10–18 (AYSGGLDTS) and Ala-37. L-citrulline contacts are provided by Tyr-89 and Ser-94. Gly-119 provides a ligand contact to ATP. L-aspartate-binding residues include Thr-121, Asn-125, and Asp-126. Asn-125 is an L-citrulline binding site. L-citrulline-binding residues include Arg-129, Ser-178, Ser-187, Glu-263, and Tyr-275.

It belongs to the argininosuccinate synthase family. Type 1 subfamily. In terms of assembly, homotetramer.

Its subcellular location is the cytoplasm. It catalyses the reaction L-citrulline + L-aspartate + ATP = 2-(N(omega)-L-arginino)succinate + AMP + diphosphate + H(+). It functions in the pathway amino-acid biosynthesis; L-arginine biosynthesis; L-arginine from L-ornithine and carbamoyl phosphate: step 2/3. This chain is Argininosuccinate synthase, found in Photobacterium profundum (strain SS9).